Consider the following 235-residue polypeptide: Clathrin light chain A (235 aa).

A disordered region spans residues 1–32 (MAELDPFGAPAGAPGGPALGNGVAGAGEEDPA). The segment covering 13 to 25 (APGGPALGNGVAG) has biased composition (gly residues). An involved in binding clathrin heavy chain region spans residues 99 to 161 (VDRLQSEPES…QLQKTKANNR (63 aa)). A phosphoserine mark is found at Ser-104 and Ser-193. The residue at position 210 (Lys-210) is an N6-acetyllysine. Ser-223 carries the phosphoserine modification. Lys-229 carries the post-translational modification N6-acetyllysine.

Belongs to the clathrin light chain family. In terms of assembly, clathrin coats are formed from molecules containing 3 heavy chains and 3 light chains. Interacts with CALY; the interaction stimulates clathrin self-assembly and clathrin-mediated endocytosis. Interacts with CKAP5 and TACC3 forming the TACC3/ch-TOG/clathrin complex located at spindle inter-microtubules bridges; the complex implicates clathrin triskelions.

The protein localises to the cytoplasmic vesicle membrane. It is found in the membrane. The protein resides in the coated pit. It localises to the cytoplasm. Its subcellular location is the cytoskeleton. The protein localises to the spindle. Functionally, clathrin is the major protein of the polyhedral coat of coated pits and vesicles. Acts as a component of the TACC3/ch-TOG/clathrin complex proposed to contribute to stabilization of kinetochore fibers of the mitotic spindle by acting as inter-microtubule bridge. This Mus musculus (Mouse) protein is Clathrin light chain A (Clta).